Reading from the N-terminus, the 962-residue chain is Protease 3 (962 aa).

The first 23 residues, 1–23, serve as a signal peptide directing secretion; it reads MPRSTWFKALLLLVALWAPLSQA. A Zn(2+)-binding site is contributed by histidine 88. The active-site Proton acceptor is the glutamate 91. Zn(2+)-binding residues include histidine 92 and glutamate 169.

Belongs to the peptidase M16 family. As to quaternary structure, monomer. Zn(2+) is required as a cofactor.

The protein localises to the periplasm. The enzyme catalyses Preferential cleavage of 16-Tyr-|-Leu-17 and 25-Phe-|-Tyr-26 bonds of oxidized insulin B chain. Also acts on other substrates of Mw less than 7 kDa such as insulin and glucagon.. In terms of biological role, endopeptidase that degrades small peptides of less than 7 kDa, such as glucagon and insulin. This chain is Protease 3 (ptrA), found in Escherichia coli (strain K12).